Consider the following 485-residue polypeptide: Predicted GPI-anchored protein 27 (485 aa).

The signal sequence occupies residues 1–20 (MHFTSSLLATLIWFTLPVQS). N-linked (GlcNAc...) asparagine glycans are attached at residues Asn-30, Asn-86, Asn-96, and Asn-444. Gly-467 carries the GPI-anchor amidated glycine lipid modification. A propeptide spans 468–485 (LVLVSSGVLLGTCLLFIL) (removed in mature form).

It is found in the cell membrane. The polypeptide is Predicted GPI-anchored protein 27 (PGA27) (Candida albicans (strain SC5314 / ATCC MYA-2876) (Yeast)).